Consider the following 101-residue polypeptide: Small ribosomal subunit protein uS14 (101 aa).

Residues 53-72 form a disordered region; the sequence is RDAAAVRVRNRDSHDGRPRG. The span at 61 to 70 shows a compositional bias: basic and acidic residues; the sequence is RNRDSHDGRP.

The protein belongs to the universal ribosomal protein uS14 family. In terms of assembly, part of the 30S ribosomal subunit. Contacts proteins S3 and S10.

Binds 16S rRNA, required for the assembly of 30S particles and may also be responsible for determining the conformation of the 16S rRNA at the A site. The protein is Small ribosomal subunit protein uS14 of Corynebacterium glutamicum (strain R).